We begin with the raw amino-acid sequence, 118 residues long: Alpha-amylase inhibitor 4 (118 aa).

Intrachain disulfides connect cysteine 7–cysteine 60, cysteine 21–cysteine 49, cysteine 30–cysteine 82, and cysteine 50–cysteine 101.

This sequence belongs to the protease inhibitor I6 (cereal trypsin/alpha-amylase inhibitor) family.

Its subcellular location is the secreted. Functionally, alpha-amylase inhibitor. This is Alpha-amylase inhibitor 4 from Sorghum bicolor (Sorghum).